The chain runs to 116 residues: Putative pterin-4-alpha-carbinolamine dehydratase (116 aa).

Belongs to the pterin-4-alpha-carbinolamine dehydratase family.

The catalysed reaction is (4aS,6R)-4a-hydroxy-L-erythro-5,6,7,8-tetrahydrobiopterin = (6R)-L-erythro-6,7-dihydrobiopterin + H2O. This Xylella fastidiosa (strain M23) protein is Putative pterin-4-alpha-carbinolamine dehydratase.